We begin with the raw amino-acid sequence, 156 residues long: Probable histone H2A.6 (156 aa).

Disordered regions lie at residues 1–26 (MDVG…KKPV) and 129–156 (KKTA…QARS). Residues 9-26 (AAKKAVGRKLGGPKKKPV) are compositionally biased toward basic residues. A compositionally biased stretch (basic and acidic residues) spans 130 to 147 (KTAEKADKPAKASKDKAA). Positions 149 to 152 (SPKK) match the SPKK motif motif.

It belongs to the histone H2A family. As to quaternary structure, the nucleosome is a histone octamer containing two molecules each of H2A, H2B, H3 and H4 assembled in one H3-H4 heterotetramer and two H2A-H2B heterodimers. The octamer wraps approximately 147 bp of DNA.

It is found in the nucleus. The protein localises to the chromosome. Functionally, core component of nucleosome. Nucleosomes wrap and compact DNA into chromatin, limiting DNA accessibility to the cellular machineries which require DNA as a template. Histones thereby play a central role in transcription regulation, DNA repair, DNA replication and chromosomal stability. DNA accessibility is regulated via a complex set of post-translational modifications of histones, also called histone code, and nucleosome remodeling. The polypeptide is Probable histone H2A.6 (Oryza sativa subsp. indica (Rice)).